A 565-amino-acid chain; its full sequence is Proline--tRNA ligase (565 aa).

The protein belongs to the class-II aminoacyl-tRNA synthetase family. ProS type 1 subfamily. Homodimer.

It localises to the cytoplasm. It carries out the reaction tRNA(Pro) + L-proline + ATP = L-prolyl-tRNA(Pro) + AMP + diphosphate. In terms of biological role, catalyzes the attachment of proline to tRNA(Pro) in a two-step reaction: proline is first activated by ATP to form Pro-AMP and then transferred to the acceptor end of tRNA(Pro). As ProRS can inadvertently accommodate and process non-cognate amino acids such as alanine and cysteine, to avoid such errors it has two additional distinct editing activities against alanine. One activity is designated as 'pretransfer' editing and involves the tRNA(Pro)-independent hydrolysis of activated Ala-AMP. The other activity is designated 'posttransfer' editing and involves deacylation of mischarged Ala-tRNA(Pro). The misacylated Cys-tRNA(Pro) is not edited by ProRS. This is Proline--tRNA ligase from Lactobacillus acidophilus (strain ATCC 700396 / NCK56 / N2 / NCFM).